A 385-amino-acid chain; its full sequence is Chorismate synthase (385 aa).

Residues R40 and R46 each coordinate NADP(+). Residues 128-130 (RAS), 248-249 (QA), G293, 308-312 (KAIPS), and R334 each bind FMN.

The protein belongs to the chorismate synthase family. As to quaternary structure, homotetramer. FMNH2 serves as cofactor.

The enzyme catalyses 5-O-(1-carboxyvinyl)-3-phosphoshikimate = chorismate + phosphate. It functions in the pathway metabolic intermediate biosynthesis; chorismate biosynthesis; chorismate from D-erythrose 4-phosphate and phosphoenolpyruvate: step 7/7. Its function is as follows. Catalyzes the anti-1,4-elimination of the C-3 phosphate and the C-6 proR hydrogen from 5-enolpyruvylshikimate-3-phosphate (EPSP) to yield chorismate, which is the branch point compound that serves as the starting substrate for the three terminal pathways of aromatic amino acid biosynthesis. This reaction introduces a second double bond into the aromatic ring system. This Endomicrobium trichonymphae protein is Chorismate synthase.